The following is a 120-amino-acid chain: NAD(P)H-quinone oxidoreductase subunit 3, chloroplastic (120 aa).

The next 3 membrane-spanning stretches (helical) occupy residues 9–29 (IFWA…LISG), 64–84 (MFAL…PWAM), and 88–108 (VLGV…ILGL).

Belongs to the complex I subunit 3 family. NDH is composed of at least 16 different subunits, 5 of which are encoded in the nucleus.

The protein resides in the plastid. Its subcellular location is the chloroplast thylakoid membrane. It carries out the reaction a plastoquinone + NADH + (n+1) H(+)(in) = a plastoquinol + NAD(+) + n H(+)(out). The enzyme catalyses a plastoquinone + NADPH + (n+1) H(+)(in) = a plastoquinol + NADP(+) + n H(+)(out). NDH shuttles electrons from NAD(P)H:plastoquinone, via FMN and iron-sulfur (Fe-S) centers, to quinones in the photosynthetic chain and possibly in a chloroplast respiratory chain. The immediate electron acceptor for the enzyme in this species is believed to be plastoquinone. Couples the redox reaction to proton translocation, and thus conserves the redox energy in a proton gradient. This chain is NAD(P)H-quinone oxidoreductase subunit 3, chloroplastic, found in Olimarabidopsis pumila (Dwarf rocket).